We begin with the raw amino-acid sequence, 215 residues long: Putative glycosyltransferase ALG1L2 (215 aa).

The disordered stretch occupies residues 40-66; that stretch reads PFRARSEPEDPDTERSAFTERDSGSGL. The span at 43 to 62 shows a compositional bias: basic and acidic residues; sequence ARSEPEDPDTERSAFTERDS.

It belongs to the glycosyltransferase group 1 family.

In terms of biological role, putative glycosyltransferase. The polypeptide is Putative glycosyltransferase ALG1L2 (ALG1L2) (Homo sapiens (Human)).